The primary structure comprises 306 residues: Phosphoadenosine phosphosulfate reductase (306 aa).

Disordered regions lie at residues methionine 1–glycine 30 and tyrosine 245–alanine 266.

Belongs to the PAPS reductase family. CysH subfamily.

It catalyses the reaction [thioredoxin]-disulfide + sulfite + adenosine 3',5'-bisphosphate + 2 H(+) = [thioredoxin]-dithiol + 3'-phosphoadenylyl sulfate. It functions in the pathway sulfur metabolism; hydrogen sulfide biosynthesis; sulfite from sulfate: step 3/3. Its function is as follows. The NADP dependent reduction of PAPS into sulfite involves thioredoxin which probably plays the role of a thiol carrier. This is Phosphoadenosine phosphosulfate reductase (sA) from Emericella nidulans (strain FGSC A4 / ATCC 38163 / CBS 112.46 / NRRL 194 / M139) (Aspergillus nidulans).